The sequence spans 32 residues: NYLHDTVGRLWGPSRAGLLDGLDWMVGDVQSR.

The N-terminus is blocked.

Inhibited by phenylmethanesulfonyl fluoride (PMSF). Not inhibited by EDTA, EGTA, beta-mercaptoethanol, indoacetamide, benzamidine, aprotinin, pepstatin A and trypsin inhibitor. In terms of biological role, plasmin-like serine protease. Has fibrinolytic and fibrinogenolytic but not plasminogenolytic activity. Cleaves after Arg and Lys residues. This is Fibrinolytic enzyme from Hediste japonica (Polychaete worm).